A 444-amino-acid polypeptide reads, in one-letter code: Glutamate--tRNA ligase 1 (444 aa).

Residues 7–17 carry the 'HIGH' region motif; that stretch reads PSPTGYLHVGN. The 'KMSKS' region motif lies at 238–242; the sequence is KISKR. Residue Lys241 coordinates ATP.

This sequence belongs to the class-I aminoacyl-tRNA synthetase family. Glutamate--tRNA ligase type 1 subfamily. In terms of assembly, monomer.

Its subcellular location is the cytoplasm. The enzyme catalyses tRNA(Glu) + L-glutamate + ATP = L-glutamyl-tRNA(Glu) + AMP + diphosphate. Functionally, catalyzes the attachment of glutamate to tRNA(Glu) in a two-step reaction: glutamate is first activated by ATP to form Glu-AMP and then transferred to the acceptor end of tRNA(Glu). The protein is Glutamate--tRNA ligase 1 of Wolbachia pipientis subsp. Culex pipiens (strain wPip).